The chain runs to 403 residues: Phosphopentomutase (403 aa).

6 residues coordinate Mn(2+): D13, D298, H303, D339, H340, and H351.

It belongs to the phosphopentomutase family. The cofactor is Mn(2+).

The protein localises to the cytoplasm. The catalysed reaction is 2-deoxy-alpha-D-ribose 1-phosphate = 2-deoxy-D-ribose 5-phosphate. It carries out the reaction alpha-D-ribose 1-phosphate = D-ribose 5-phosphate. The protein operates within carbohydrate degradation; 2-deoxy-D-ribose 1-phosphate degradation; D-glyceraldehyde 3-phosphate and acetaldehyde from 2-deoxy-alpha-D-ribose 1-phosphate: step 1/2. Its function is as follows. Isomerase that catalyzes the conversion of deoxy-ribose 1-phosphate (dRib-1-P) and ribose 1-phosphate (Rib-1-P) to deoxy-ribose 5-phosphate (dRib-5-P) and ribose 5-phosphate (Rib-5-P), respectively. The chain is Phosphopentomutase from Streptococcus pyogenes serotype M28 (strain MGAS6180).